A 388-amino-acid chain; its full sequence is Protein DVU_0534 (388 aa).

The next 10 membrane-spanning stretches (helical) occupy residues 10 to 31 (LMTP…LTVL), 57 to 78 (LLCG…YLFG), 89 to 106 (AITT…ALNY), 130 to 144 (EVGL…VLFV), 166 to 191 (LTLV…LFLI), 199 to 222 (LWYS…SMVI), 254 to 265 (AASFVLAGYFMI), 291 to 306 (MLGF…ALGV), 316 to 328 (FASV…IVMN), and 354 to 368 (IGIS…ITVY).

Belongs to the NrfD family.

The protein localises to the cell membrane. In terms of biological role, HMWC (high-molecular-weight cytochrome c), ORF2, ORF3, ORF4, ORF5 and ORF6 in the HMC operon form a transmembrane protein complex that allows electron flow from the periplasmic hydrogenase to the cytoplasmic enzymes that catalyze reduction of sulfates. The chain is Protein DVU_0534 from Nitratidesulfovibrio vulgaris (strain ATCC 29579 / DSM 644 / CCUG 34227 / NCIMB 8303 / VKM B-1760 / Hildenborough) (Desulfovibrio vulgaris).